The sequence spans 533 residues: Beta-1,2-xylosyltransferase RCN11 (533 aa).

The Cytoplasmic portion of the chain corresponds to 1–23; sequence MMPVRTYHHHHHHNNSNNHRLRR. The helical; Signal-anchor for type II membrane protein transmembrane segment at 24–44 threads the bilayer; sequence IIPRVLLAVFAIYAVSFAAYL. Topologically, residues 45–533 are lumenal; that stretch reads LRHQSPHPHP…LSNILKGFGC (489 aa). The segment at 51–78 is disordered; the sequence is HPHPHPAADPERDAVDAAGGGGGGGAVD. Over residues 56–65 the composition is skewed to basic and acidic residues; the sequence is PAADPERDAV. Residues asparagine 307 and asparagine 313 are each glycosylated (N-linked (GlcNAc...) asparagine).

This sequence belongs to the glycosyltransferase 61 family. As to expression, expressed at the base of the crown roots and in the basal region of the shoot, which contains the shoot and axillary meristems.

The protein localises to the golgi apparatus membrane. The protein operates within glycan metabolism. In terms of biological role, glycosyltransferase involved in the xylosylation of N-glycans. Possesses beta-1,2-xylosyltransferase activity, transferring xylose from UDP-xylose to the core beta-linked mannose of N-glycans. Beta-1,2-linked xylose residues on N-glycans are critical for seed germination and plant development and growth under conditions of abiotic stress. This chain is Beta-1,2-xylosyltransferase RCN11, found in Oryza sativa subsp. japonica (Rice).